The following is a 314-amino-acid chain: Zinc transporter ZIP3 (314 aa).

Residues 1-3 (MVK) are Extracellular-facing. The chain crosses the membrane as a helical span at residues 4–24 (LLVAKILCMVGVFFFMLLGSL). Topologically, residues 25-42 (LPVKIIETDFEKAHRSKK) are cytoplasmic. A helical transmembrane segment spans residues 43–63 (ILSLCNTFGGGVFLATCFNAL). Residues 64–85 (LPAVREKLQKVLSLGHISTDYP) lie on the Extracellular side of the membrane. The chain crosses the membrane as a helical span at residues 86-106 (LAETILLLGFFMTVFLEQLIL). The Cytoplasmic portion of the chain corresponds to 107 to 169 (TFRKEKPSFI…QGLSRASPVR (63 aa)). 2 positions are modified to phosphoserine: Ser125 and Ser129. A helical membrane pass occupies residues 170–190 (LLSLAFALSAHSVFEGLALGL). Residues 191 to 196 (QEEGEK) are Extracellular-facing. Residues 197–217 (VVSLFVGVAVHETLVAVALGI) form a helical membrane-spanning segment. Residues 218–229 (SMARSAMPLRDA) are Cytoplasmic-facing. The helical transmembrane segment at 230-250 (AKLAVTVSAMIPLGIGLGLGI) threads the bilayer. At 251–262 (ESAQGVPGSVAS) the chain is on the extracellular side. The chain crosses the membrane as a helical span at residues 263–283 (VLLQGLAGGTFLFITFLEILA). The Cytoplasmic portion of the chain corresponds to 284 to 292 (KELEEKSDR). A helical transmembrane segment spans residues 293–313 (LLKVLFLVLGYTVLAGMVFLK). Residue Trp314 is a topological domain, extracellular.

This sequence belongs to the ZIP transporter (TC 2.A.5) family.

The protein localises to the cell membrane. Its subcellular location is the apical cell membrane. The enzyme catalyses Zn(2+)(in) = Zn(2+)(out). Functionally, transporter for the divalent cation Zn(2+). Mediates the influx of Zn(2+) into cells from extracellular space. Controls Zn(2+) accumulation into dentate gyrus granule cells in the hippocampus. Mediates Zn(2+) reuptake from the secreted milk within the alveolar lumen. This chain is Zinc transporter ZIP3, found in Homo sapiens (Human).